Reading from the N-terminus, the 419-residue chain is Creatine kinase S-type, mitochondrial (419 aa).

Residues M1–A39 constitute a mitochondrion transit peptide. A cardiolipin-binding region spans residues E40–M64. In terms of domain architecture, Phosphagen kinase N-terminal spans R46–N132. In terms of domain architecture, Phosphagen kinase C-terminal spans Y159–L401. Residues S162–R166 and H225 each bind ATP. Y255 carries the phosphotyrosine modification. ATP contacts are provided by residues R270, R326, R354–V359, and D369. Phosphothreonine is present on T356.

This sequence belongs to the ATP:guanido phosphotransferase family. As to quaternary structure, exists as an octamer composed of four CKMT2 homodimers. Sarcomere-specific. Found only in heart and skeletal muscles.

It is found in the mitochondrion inner membrane. It carries out the reaction creatine + ATP = N-phosphocreatine + ADP + H(+). In terms of biological role, reversibly catalyzes the transfer of phosphate between ATP and various phosphogens (e.g. creatine phosphate). Creatine kinase isoenzymes play a central role in energy transduction in tissues with large, fluctuating energy demands, such as skeletal muscle, heart, brain and spermatozoa. The protein is Creatine kinase S-type, mitochondrial (CKMT2) of Homo sapiens (Human).